Here is a 232-residue protein sequence, read N- to C-terminus: NAD(P)H-hydrate epimerase (232 aa).

Positions 9–219 constitute a YjeF N-terminal domain; that stretch reads AISVDEELFN…KLQDKYAMEL (211 aa). 62 to 66 provides a ligand contact to (6S)-NADPHX; sequence NNGGD. The K(+) site is built by Asn-63 and Asp-127. (6S)-NADPHX-binding positions include 131-137 and Asp-160; that span reads GFSFKPP. Position 163 (Ser-163) interacts with K(+).

It belongs to the NnrE/AIBP family. K(+) serves as cofactor.

The enzyme catalyses (6R)-NADHX = (6S)-NADHX. It carries out the reaction (6R)-NADPHX = (6S)-NADPHX. In terms of biological role, catalyzes the epimerization of the S- and R-forms of NAD(P)HX, a damaged form of NAD(P)H that is a result of enzymatic or heat-dependent hydration. This is a prerequisite for the S-specific NAD(P)H-hydrate dehydratase to allow the repair of both epimers of NAD(P)HX. This is NAD(P)H-hydrate epimerase from Aedes aegypti (Yellowfever mosquito).